The primary structure comprises 102 residues: RNA-binding protein Hfq (102 aa).

The region spanning 9–68 is the Sm domain; that stretch reads DPFLNALRRERVPVSIYLVNGIKLQGQIESFDQFVILLKNTVSQMVYKHAISTVVPSRPV. The tract at residues 63–102 is disordered; it reads VPSRPVSHHSNNAGGGASNNYHHGSNVQGSTAQQDSEETE. Residues 70 to 88 are compositionally biased toward low complexity; sequence HHSNNAGGGASNNYHHGSN.

This sequence belongs to the Hfq family. Homohexamer.

RNA chaperone that binds small regulatory RNA (sRNAs) and mRNAs to facilitate mRNA translational regulation in response to envelope stress, environmental stress and changes in metabolite concentrations. Also binds with high specificity to tRNAs. This is RNA-binding protein Hfq from Salmonella choleraesuis (strain SC-B67).